The sequence spans 334 residues: Forkhead box protein N2 (334 aa).

Disordered regions lie at residues 1-52 (MGPV…SGTT) and 83-108 (SPLYDIEGDLSPSGCQTPEKLSASSK). The fork-head DNA-binding region spans 108–204 (KPPYSFSLLI…QALKKQPFSS (97 aa)).

The protein localises to the nucleus. This is Forkhead box protein N2 from Xenopus tropicalis (Western clawed frog).